The chain runs to 457 residues: Multidrug resistance protein MdtK (457 aa).

The next 12 membrane-spanning stretches (helical) occupy residues L11–V31, I53–A73, W93–I113, A127–A147, G160–Y180, G189–V209, L243–V263, I276–T296, A314–V334, V350–I370, I387–A407, and P418–L438.

Belongs to the multi antimicrobial extrusion (MATE) (TC 2.A.66.1) family. MdtK subfamily.

It is found in the cell inner membrane. Its function is as follows. Multidrug efflux pump that functions probably as a Na(+)/drug antiporter. The chain is Multidrug resistance protein MdtK from Escherichia coli (strain SE11).